The following is a 424-amino-acid chain: Na(+)/H(+) antiporter NhaA (424 aa).

11 consecutive transmembrane segments (helical) span residues 23–43 (ILLI…LATL), 65–85 (VHLW…GLEI), 102–122 (LPFI…MFFV), 131–151 (GWAI…ALLG), 160–180 (LFLV…IALF), 183–203 (AKIN…MFAC), 211–231 (LLVY…SGVH), 265–285 (ALHP…NAGV), 303–323 (IAAG…WLAV), 341–361 (AVSM…SLAF), and 373–393 (IGIL…LRLA).

Belongs to the NhaA Na(+)/H(+) (TC 2.A.33) antiporter family.

It localises to the cell inner membrane. It catalyses the reaction Na(+)(in) + 2 H(+)(out) = Na(+)(out) + 2 H(+)(in). Functionally, na(+)/H(+) antiporter that extrudes sodium in exchange for external protons. This is Na(+)/H(+) antiporter NhaA from Sphingopyxis alaskensis (strain DSM 13593 / LMG 18877 / RB2256) (Sphingomonas alaskensis).